The following is a 218-amino-acid chain: Glutathione S-transferase Mu 7 (218 aa).

In terms of domain architecture, GST N-terminal spans 2–88 (PMTLGYWDIR…YLGRKHNLCG (87 aa)). Glutathione contacts are provided by residues 7 to 8 (YW), 46 to 50 (WLNEK), 59 to 60 (NL), and 72 to 73 (QS). The 119-residue stretch at 90–208 (TEEERIRVDI…KSSRFLPRPL (119 aa)) folds into the GST C-terminal domain. A substrate-binding site is contributed by tyrosine 116.

It belongs to the GST superfamily. Mu family. In terms of assembly, homodimer.

Its subcellular location is the cytoplasm. The catalysed reaction is RX + glutathione = an S-substituted glutathione + a halide anion + H(+). In terms of biological role, conjugation of reduced glutathione to a wide number of exogenous and endogenous hydrophobic electrophiles. This chain is Glutathione S-transferase Mu 7, found in Rattus norvegicus (Rat).